We begin with the raw amino-acid sequence, 279 residues long: Large ribosomal subunit protein uL2 (279 aa).

2 disordered regions span residues 33 to 58 (LLAPLPKKGGRNAHGRITTRHQGGGH) and 223 to 279 (GVAM…RKRG). Basic residues-rich tracts occupy residues 40-58 (KGGRNAHGRITTRHQGGGH) and 269-279 (VRRRYATRKRG).

The protein belongs to the universal ribosomal protein uL2 family. As to quaternary structure, part of the 50S ribosomal subunit. Forms a bridge to the 30S subunit in the 70S ribosome.

Functionally, one of the primary rRNA binding proteins. Required for association of the 30S and 50S subunits to form the 70S ribosome, for tRNA binding and peptide bond formation. It has been suggested to have peptidyltransferase activity; this is somewhat controversial. Makes several contacts with the 16S rRNA in the 70S ribosome. The sequence is that of Large ribosomal subunit protein uL2 from Salinispora arenicola (strain CNS-205).